Consider the following 273-residue polypeptide: Mediator of RNA polymerase II transcription subunit 27 (273 aa).

It belongs to the Mediator complex subunit 27 family. As to quaternary structure, component of the Mediator complex.

Its subcellular location is the nucleus. Its function is as follows. Component of the Mediator complex, a coactivator involved in the regulated transcription of nearly all RNA polymerase II-dependent genes. Mediator functions as a bridge to convey information from gene-specific regulatory proteins to the basal RNA polymerase II transcription machinery. Mediator is recruited to promoters by direct interactions with regulatory proteins and serves as a scaffold for the assembly of a functional preinitiation complex with RNA polymerase II and the general transcription factors. This is Mediator of RNA polymerase II transcription subunit 27 (med27) from Schizosaccharomyces pombe (strain 972 / ATCC 24843) (Fission yeast).